The primary structure comprises 180 residues: Crossover junction endodeoxyribonuclease RuvC (180 aa).

Catalysis depends on residues aspartate 7, glutamate 66, and aspartate 138. 3 residues coordinate Mg(2+): aspartate 7, glutamate 66, and aspartate 138.

The protein belongs to the RuvC family. In terms of assembly, homodimer which binds Holliday junction (HJ) DNA. The HJ becomes 2-fold symmetrical on binding to RuvC with unstacked arms; it has a different conformation from HJ DNA in complex with RuvA. In the full resolvosome a probable DNA-RuvA(4)-RuvB(12)-RuvC(2) complex forms which resolves the HJ. The cofactor is Mg(2+).

Its subcellular location is the cytoplasm. The catalysed reaction is Endonucleolytic cleavage at a junction such as a reciprocal single-stranded crossover between two homologous DNA duplexes (Holliday junction).. In terms of biological role, the RuvA-RuvB-RuvC complex processes Holliday junction (HJ) DNA during genetic recombination and DNA repair. Endonuclease that resolves HJ intermediates. Cleaves cruciform DNA by making single-stranded nicks across the HJ at symmetrical positions within the homologous arms, yielding a 5'-phosphate and a 3'-hydroxyl group; requires a central core of homology in the junction. The consensus cleavage sequence is 5'-(A/T)TT(C/G)-3'. Cleavage occurs on the 3'-side of the TT dinucleotide at the point of strand exchange. HJ branch migration catalyzed by RuvA-RuvB allows RuvC to scan DNA until it finds its consensus sequence, where it cleaves and resolves the cruciform DNA. The chain is Crossover junction endodeoxyribonuclease RuvC from Burkholderia orbicola (strain AU 1054).